The following is an 86-amino-acid chain: Electron transfer flavoprotein regulatory factor 1 (86 aa).

This sequence belongs to the complex I LYR family. In terms of assembly, homotetramer. Interacts with NDUFAB1. Interacts with ETFA. Interacts with ETFB.

It localises to the mitochondrion. In terms of biological role, acts as a regulator of the electron transfer flavoprotein by promoting the removal of flavin from the ETF holoenzyme (composed of ETFA and ETFB). The chain is Electron transfer flavoprotein regulatory factor 1 from Mus musculus (Mouse).